A 314-amino-acid chain; its full sequence is Basic leucine zipper 63 (314 aa).

At Ser-29 the chain carries Phosphoserine; by KIN10. The interval 94 to 177 (KPQDTSGRSD…SRRRKQAHLS (84 aa)) is disordered. Residues 96–133 (QDTSGRSDNGGANESEQASLASSKATPMMSSAITSGSE) are compositionally biased toward polar residues. The 64-residue stretch at 151–214 (NVKRVKRMLS…NDASVENRVL (64 aa)) folds into the bZIP domain. Residues 153–172 (KRVKRMLSNRESARRSRRRK) are basic motif. The Nuclear localization signal 1 motif lies at 155-162 (VKRMLSNR). The interval 179–193 (LETQVSQLRVENSKL) is leucine-zipper. A disordered region spans residues 253 to 274 (SLPSETSNSPDTTSSQVTTPEI). Ser-294 and Ser-300 each carry phosphoserine; by KIN10. The Nuclear localization signal 2 signature appears at 295-302 (MRRVESLE).

Belongs to the bZIP family. As to quaternary structure, homodimer. Forms a heterodimer with LSD1, BZIP1, BZIP2, BZIP9, BZIP10, BZIP11, BZIP25, BZIP44 and BZIP53. Interacts with KIN10 and SNF4. Component of a ternary complex composed of BZIP2-BZIP63 heterodimer and KIN10. Post-translationally, phosphorylated. The phosphorylation at Ser-29, Ser-294 and Ser-300 by KIN10 strongly enhances its ability to form homo- as well as heterodimers and are then essential for its transcriptional activity. As to expression, expressed in roots, shoots, young leaves, pollen, and flowers.

It is found in the nucleus. Its activity is regulated as follows. Up-regulated by KIN10 under a phosphorylation-dependent manner. Its function is as follows. Transcription factor involved in controlling responses to starvation. BZIP2-BZIP63-KIN10 complex binds to the ETFQO promoter to up-regulate its transcription. The protein is Basic leucine zipper 63 (BZIP63) of Arabidopsis thaliana (Mouse-ear cress).